The sequence spans 196 residues: Transmembrane protein 52 (196 aa).

The N-terminal stretch at 1–28 (MAPGPSATQGILLLLPLLPLSQVTLGSA) is a signal peptide. The helical transmembrane segment at 47–67 (LWHVGLILLAILLMLLCGVTA) threads the bilayer. A disordered region spans residues 162–196 (EEVAAPSEKTNSLPEALEPETTGGPQEPGPSAQRP).

The protein localises to the membrane. This is Transmembrane protein 52 (Tmem52) from Mus musculus (Mouse).